The sequence spans 505 residues: uncharacterized protein (505 aa).

The Radical SAM core domain maps to 193 to 440; that stretch reads CTNKKCNLCE…LEIKKKYIGR (248 aa). Positions 208, 216, and 219 each coordinate [4Fe-4S] cluster. A TRAM domain is found at 435 to 499; it reads KKYIGRVLEV…EKYLEGRILK (65 aa).

It depends on [4Fe-4S] cluster as a cofactor.

This is an uncharacterized protein from Methanocaldococcus jannaschii (strain ATCC 43067 / DSM 2661 / JAL-1 / JCM 10045 / NBRC 100440) (Methanococcus jannaschii).